Reading from the N-terminus, the 126-residue chain is Adenosine 5'-monophosphoramidase HINT1 (126 aa).

Ala-2 is modified (N-acetylalanine). The HIT domain occupies 18–126; sequence IFGKIIRKEI…GGRQMNWPPG (109 aa). N6-acetyllysine occurs at positions 21 and 30. 43–44 is a binding site for AMP; sequence DI. A phosphoserine mark is found at Ser-45 and Ser-72. Residues Asn-99, 105–107, and 112–114 contribute to the AMP site; these read GQS and HLH. Residues 110-114 carry the Histidine triad motif motif; sequence HVHLH. Catalysis depends on His-112, which acts as the Tele-AMP-histidine intermediate.

This sequence belongs to the HINT family. In terms of assembly, homodimer. Interacts with CDK7. Interacts with RUVBL1 and RUVBL2 and is associated with the LEF1/TCF1-CTNNB1 complex and with a KAT5 histone acetyltransferase complex. Identified in a complex with MITF and CTNNB1. Interacts with CDC34 and RBX1, and is part of a SCF (SKP2-CUL1-F-box protein) E3 ubiquitin-protein ligase complex. Interacts with SUMO1, SUMO2 and RGS17. Interacts with the Ten-1 ICD form of TENM1. Interacts with CALM1; interaction increases in the presence of calcium ions. Widely expressed.

It localises to the cytoplasm. Its subcellular location is the nucleus. It catalyses the reaction adenosine 5'-phosphoramidate + H2O = AMP + NH4(+). Functionally, exhibits adenosine 5'-monophosphoramidase activity, hydrolyzing purine nucleotide phosphoramidates with a single phosphate group such as adenosine 5'monophosphoramidate (AMP-NH2) to yield AMP and NH2. Hydrolyzes adenosine 5'monophosphomorpholidate (AMP-morpholidate) and guanosine 5'monophosphomorpholidate (GMP-morpholidate). Hydrolyzes lysyl-AMP (AMP-N-epsilon-(N-alpha-acetyl lysine methyl ester)) generated by lysine tRNA ligase, as well as Met-AMP, His-AMP and Asp-AMP, lysyl-GMP (GMP-N-epsilon-(N-alpha-acetyl lysine methyl ester)) and AMP-N-alanine methyl ester. Can also convert adenosine 5'-O-phosphorothioate and guanosine 5'-O-phosphorothioate to the corresponding nucleoside 5'-O-phosphates with concomitant release of hydrogen sulfide. In addition, functions as a scaffolding protein that modulates transcriptional activation by the LEF1/TCF1-CTNNB1 complex and by the complex formed with MITF and CTNNB1. Modulates p53/TP53 levels and p53/TP53-mediated apoptosis. Modulates proteasomal degradation of target proteins by the SCF (SKP2-CUL1-F-box protein) E3 ubiquitin-protein ligase complex. Also exhibits SUMO-specific isopeptidase activity, deconjugating SUMO1 from RANGAP1 and RGS17. In Bos taurus (Bovine), this protein is Adenosine 5'-monophosphoramidase HINT1 (HINT1).